Consider the following 187-residue polypeptide: MASAHDRAVLQAIFNPTSPIGDVPGLNQEEELMDDDSAFDPELVKQVKDLELQGVSSAESGDLPAALQHFNQAISVLPQRASAYNNRAQTKRLLGDTKGAVEDLEHAISLSNGKGRSACQALVQRGLLLRLSGHDEEARLDFERAAALGSEFARQQAVILNPYAALCNRMLSEVISKLRNPEVSEMQ.

TPR repeat units lie at residues 47 to 80 (VKDL…LPQR), 82 to 114 (SAYN…SNGK), and 119 to 152 (CQAL…GSEF).

Belongs to the TTC36 family.

The polypeptide is Tetratricopeptide repeat protein 36 (ttc36) (Danio rerio (Zebrafish)).